Consider the following 122-residue polypeptide: Large ribosomal subunit protein bL12 (122 aa).

This sequence belongs to the bacterial ribosomal protein bL12 family. As to quaternary structure, homodimer. Part of the ribosomal stalk of the 50S ribosomal subunit. Forms a multimeric L10(L12)X complex, where L10 forms an elongated spine to which 2 to 4 L12 dimers bind in a sequential fashion. Binds GTP-bound translation factors.

In terms of biological role, forms part of the ribosomal stalk which helps the ribosome interact with GTP-bound translation factors. Is thus essential for accurate translation. This chain is Large ribosomal subunit protein bL12, found in Borrelia hermsii (strain HS1 / DAH).